The sequence spans 533 residues: Putative adhesin P1-like protein MPN_409 (533 aa).

Disordered stretches follow at residues 15-45 (KNHR…GSRS) and 92-166 (SGWR…SITP). Over residues 28-45 (TGAGSSSGTSTNTSGSRS) the composition is skewed to low complexity. Residues 95–107 (RNDKNGQSDENHT) are compositionally biased toward basic and acidic residues.

The protein belongs to the adhesin P1 family.

The sequence is that of Putative adhesin P1-like protein MPN_409 from Mycoplasma pneumoniae (strain ATCC 29342 / M129 / Subtype 1) (Mycoplasmoides pneumoniae).